The primary structure comprises 627 residues: MIQIGKIFADRYRIIKEIGRGGMANVYQGEDTFLGDRLVAIKVLRSNFENDDIAIARFQREAFAMAELSHPNIVGISDVGEFESQQYIVMEFVDGMTLKQYINQNAPLANDEAIEIITEILSAMDMAHSHGIIHRDLKPQNVLVSSSGTVKVTDFGIAKALSETSLTQTNTMFGSVHYLSPEQARGSNATVQSDIYAIGIILFELLTGQIPFDGDSAVAIALKHFQESIPSIINLNPEVPQALENVVIKATAKDIKNRYTDVEEMMTDVATSTSLDRRGEEKLVFNKDHDETKIMPANLINPYDTKPLIDKKEDNDSQTDEKAASSEVGNKNKKSKKGLIIGLIILLLVVGGATLAWVVSTPTNVKIPNVTNSTLSQAKSKIKDAKLKVGTVHKQQSSTIAEGKVIKTDPTSGTTVRSNSSVDIYVSTGNEDIIKMKDFVGEKIDEAMATLLKDYGIDESQVTQTSVPSDSYPAGTIIKQSPKKGSSFDTKGSEKITFEVSSGKQVEVPDYKPNGQYMTYSQYQAALKAAGFTNITLDPQATTNQQADGYVYSVYPNVGTSVDPTQEIVVTYSVYTAPSSSSTTSESTTTSETSSSTTSSTSSSTTSQPSTDNNNSSKESSTTSSSS.

Positions 12–275 (YRIIKEIGRG…MTDVATSTSL (264 aa)) constitute a Protein kinase domain. ATP-binding positions include 18-26 (IGRGGMANV) and Lys-42. Residue Asp-136 is the Proton acceptor of the active site. Positions 304–331 (DTKPLIDKKEDNDSQTDEKAASSEVGNK) are disordered. Over residues 307–324 (PLIDKKEDNDSQTDEKAA) the composition is skewed to basic and acidic residues. PASTA domains follow at residues 361-428 (TPTN…YVST), 430-502 (NEDI…EVSS), and 503-574 (GKQV…TYSV). A disordered region spans residues 464–490 (QTSVPSDSYPAGTIIKQSPKKGSSFDT). The tract at residues 577–627 (APSSSSTTSESTTTSETSSSTTSSTSSSTTSQPSTDNNNSSKESSTTSSSS) is disordered. Low complexity predominate over residues 579–627 (SSSSTTSESTTTSETSSSTTSSTSSSTTSQPSTDNNNSSKESSTTSSSS).

Belongs to the protein kinase superfamily. Ser/Thr protein kinase family.

It carries out the reaction L-seryl-[protein] + ATP = O-phospho-L-seryl-[protein] + ADP + H(+). It catalyses the reaction L-threonyl-[protein] + ATP = O-phospho-L-threonyl-[protein] + ADP + H(+). The protein is Probable serine/threonine-protein kinase PknB (pknB) of Lactococcus lactis subsp. lactis (strain IL1403) (Streptococcus lactis).